We begin with the raw amino-acid sequence, 441 residues long: TIGSICMVIGIVSLMLQIGNMISIWVSHSIQTGNQNQVEPISNTNFLTEKAVASVTLAGNSSLCPIRGWAVHSKDNSIRIGSKGDVFVIREPFISCSHLECRTFFLTQGALLNDKHSNGTVKDRSPHRTLMSCPVGEAPSPYNSRFESVAWSASACHDGTSWLTIGISGPDNGAVAVLKYNGMITDTIKSWRNNILRTQESECACVNGSCFTVMTDGPSNGQASYKIFKMEKGKVVKSVELDAPNYHYEECSCYPDAGEITCVCRDNWHGSNRPWVSFNQNLEYQIGYICSGVFGDNPRPNDGTGSCGPVSPNGAYGVKGFSFKYGNGVWIGRTKSPNSRSGFEMIWDPNGWTETDSSFSVKQDIVAITDWSGYSGSFVQHPELTGLDCIRPCFWVELIRGRPKESTIWTSGSSISFCGVNSDTVSWSWPDGAELPFTIDK.

At 1–4 the chain is on the intravirion side; it reads TIGS. Residues 3–25 form an involved in apical transport and lipid raft association region; the sequence is GSICMVIGIVSLMLQIGNMISIW. The helical transmembrane segment at 5 to 25 threads the bilayer; that stretch reads ICMVIGIVSLMLQIGNMISIW. The Virion surface portion of the chain corresponds to 26 to 441; it reads VSHSIQTGNQ…GAELPFTIDK (416 aa). Residues 28–62 are hypervariable stalk region; the sequence is HSIQTGNQNQVEPISNTNFLTEKAVASVTLAGNSS. Asn60 carries N-linked (GlcNAc...) asparagine; by host glycosylation. The head of neuraminidase stretch occupies residues 63-441; the sequence is LCPIRGWAVH…GAELPFTIDK (379 aa). 8 disulfides stabilise this stretch: Cys64–Cys389, Cys96–Cys101, Cys156–Cys203, Cys205–Cys210, Cys251–Cys264, Cys253–Cys262, Cys290–Cys307, and Cys393–Cys418. Arg90 contacts substrate. The N-linked (GlcNAc...) asparagine; by host glycan is linked to Asn118. Asp123 (proton donor/acceptor) is an active-site residue. Position 124 (Arg124) interacts with substrate. Asn207 is a glycosylation site (N-linked (GlcNAc...) asparagine; by host). 249 to 250 contacts substrate; that stretch reads EE. Position 265 (Arg265) interacts with substrate. Asp266, Gly270, and Asp296 together coordinate Ca(2+). Position 340 (Arg340) interacts with substrate. The active-site Nucleophile is Tyr374.

The protein belongs to the glycosyl hydrolase 34 family. Homotetramer. Requires Ca(2+) as cofactor. Post-translationally, N-glycosylated.

The protein resides in the virion membrane. The protein localises to the host apical cell membrane. The enzyme catalyses Hydrolysis of alpha-(2-&gt;3)-, alpha-(2-&gt;6)-, alpha-(2-&gt;8)- glycosidic linkages of terminal sialic acid residues in oligosaccharides, glycoproteins, glycolipids, colominic acid and synthetic substrates.. With respect to regulation, inhibited by the neuraminidase inhibitors zanamivir (Relenza) and oseltamivir (Tamiflu). These drugs interfere with the release of progeny virus from infected cells and are effective against all influenza strains. Resistance to neuraminidase inhibitors is quite rare. Functionally, catalyzes the removal of terminal sialic acid residues from viral and cellular glycoconjugates. Cleaves off the terminal sialic acids on the glycosylated HA during virus budding to facilitate virus release. Additionally helps virus spread through the circulation by further removing sialic acids from the cell surface. These cleavages prevent self-aggregation and ensure the efficient spread of the progeny virus from cell to cell. Otherwise, infection would be limited to one round of replication. Described as a receptor-destroying enzyme because it cleaves a terminal sialic acid from the cellular receptors. May facilitate viral invasion of the upper airways by cleaving the sialic acid moieties on the mucin of the airway epithelial cells. Likely to plays a role in the budding process through its association with lipid rafts during intracellular transport. May additionally display a raft-association independent effect on budding. Plays a role in the determination of host range restriction on replication and virulence. Sialidase activity in late endosome/lysosome traffic seems to enhance virus replication. This Aves (Cat) protein is Neuraminidase.